The primary structure comprises 314 residues: TPR repeat-containing protein MJ1345 (314 aa).

9 TPR repeats span residues 12-45 (ESILWDEYFDALEKRNYEKALLLIDKILEVRESP), 46-78 (DVYVRKARILRTLGENDKALEYFDKALKLKPKY), 80-112 (LANFLKGALLVSLGKLEEAKEVFLKLCRLEKSD), 114-146 (PVKYVTAFILKKLGEYDYALKIIDKILKKYPKS), 147-180 (AIAWAEKGEILYREGKLKKSLECFDNALKINPKD), 182-214 (QSLLYKGEILFKLGRYGEALKCLKKVFERNNKD), 215-248 (IRALMYIIQILIYLGRLNQALEYTKKALKLNPDD), 249-282 (PLLYLYKGIILNKLGKYNEAIKYFDKVLEINPNI), and 284-313 (DAWNGKAIALEKLGKINEAIECYNRALDIY).

The sequence is that of TPR repeat-containing protein MJ1345 from Methanocaldococcus jannaschii (strain ATCC 43067 / DSM 2661 / JAL-1 / JCM 10045 / NBRC 100440) (Methanococcus jannaschii).